We begin with the raw amino-acid sequence, 206 residues long: MARYLGPKLKLSRREGTDLFLKSGVRAIDSKCKLESAPGQHGARKPRLSEYGLQLREKQKVRRIYGVLEKQFRNYYKEAARLKGNTGENLLQLLETRLDNVVYRMGFGATRAESRQLVSHKSIMVNGRVVNIPSFKVSANDVVSIREKSRTQARIKAALEVAAQREKPTWVEVDSAKMEGAFKRIPERSDLSAEINEQLIVELYSK.

The S4 RNA-binding domain occupies Thr96–Lys156.

Belongs to the universal ribosomal protein uS4 family. As to quaternary structure, part of the 30S ribosomal subunit. Contacts protein S5. The interaction surface between S4 and S5 is involved in control of translational fidelity.

In terms of biological role, one of the primary rRNA binding proteins, it binds directly to 16S rRNA where it nucleates assembly of the body of the 30S subunit. With S5 and S12 plays an important role in translational accuracy. This is Small ribosomal subunit protein uS4 from Shewanella sp. (strain ANA-3).